A 361-amino-acid chain; its full sequence is Protein-L-isoaspartate O-methyltransferase domain-containing protein 2 (361 aa).

G2 is lipidated: N-myristoyl glycine. The active site involves S64. AdoMet binding motif regions lie at residues 85 to 94 (LNLGSGTGYL), 160 to 164 (YDRVY), and 181 to 191 (LKVGGILVMPL). The segment at 240–250 (VRSLQDLARIA) is BC-box. A compositionally biased stretch (polar residues) spans 303–312 (SNPSDDNSSG). A disordered region spans residues 303–335 (SNPSDDNSSGDLEEERREEEATTPPDAKPEPPV). Positions 345 to 348 (LPLP) are CUL-box.

Belongs to the methyltransferase superfamily. L-isoaspartyl/D-aspartyl protein methyltransferase family.

It localises to the cytoplasm. Its function is as follows. May act as a substrate recognition component of an ECS (Elongin BC-CUL5-SOCS-box protein) E3 ubiquitin ligase complex which mediates the ubiquitination and subsequent proteasomal degradation of target proteins. May bind to the methyltransferase cofactor S-adenosylmethionine (AdoMet) via the N-terminal AdoMet binding motif, but probably does not display methyltransferase activity. This chain is Protein-L-isoaspartate O-methyltransferase domain-containing protein 2 (PCMTD2), found in Bos taurus (Bovine).